Consider the following 269-residue polypeptide: Small ribosomal subunit protein uS2 (269 aa).

Residues 235–269 (FDAKNPLKPQNYNTLNKRPYQDSPRKPSYQNQNQR) are disordered.

It belongs to the universal ribosomal protein uS2 family.

In Aster yellows witches'-broom phytoplasma (strain AYWB), this protein is Small ribosomal subunit protein uS2.